Reading from the N-terminus, the 75-residue chain is Conotoxin Vt15.1 (75 aa).

The N-terminal stretch at 1–19 (MMPVILPLLLSLAIRGGDG) is a signal peptide. A propeptide spanning residues 20–43 (QAIQGDRDLIAKLFKRYQEHGLSV) is cleaved from the precursor. Trp73 is modified (tryptophan amide).

The protein belongs to the conotoxin V superfamily. Contains 4 disulfide bonds. As to expression, expressed by the venom duct.

The protein localises to the secreted. The protein is Conotoxin Vt15.1 of Conus planorbis (Planorbis cone).